Reading from the N-terminus, the 93-residue chain is Aspartyl/glutamyl-tRNA(Asn/Gln) amidotransferase subunit C (93 aa).

This sequence belongs to the GatC family. Heterotrimer of A, B and C subunits.

It carries out the reaction L-glutamyl-tRNA(Gln) + L-glutamine + ATP + H2O = L-glutaminyl-tRNA(Gln) + L-glutamate + ADP + phosphate + H(+). It catalyses the reaction L-aspartyl-tRNA(Asn) + L-glutamine + ATP + H2O = L-asparaginyl-tRNA(Asn) + L-glutamate + ADP + phosphate + 2 H(+). In terms of biological role, allows the formation of correctly charged Asn-tRNA(Asn) or Gln-tRNA(Gln) through the transamidation of misacylated Asp-tRNA(Asn) or Glu-tRNA(Gln) in organisms which lack either or both of asparaginyl-tRNA or glutaminyl-tRNA synthetases. The reaction takes place in the presence of glutamine and ATP through an activated phospho-Asp-tRNA(Asn) or phospho-Glu-tRNA(Gln). The polypeptide is Aspartyl/glutamyl-tRNA(Asn/Gln) amidotransferase subunit C (Helicobacter pylori (strain HPAG1)).